The chain runs to 132 residues: Fatty acid-binding protein, intestinal (132 aa).

An N-acetylalanine modification is found at Ala2. Hexadecanoate contacts are provided by Trp83 and Arg107. The tetradecanoate site is built by Trp83 and Arg107.

It belongs to the calycin superfamily. Fatty-acid binding protein (FABP) family. Expressed in the small intestine. Highest expression levels in the proximal ileum.

It is found in the cytoplasm. In terms of biological role, FABPs are thought to play a role in the intracellular transport of long-chain fatty acids and their acyl-CoA esters. FABP2 is probably involved in triglyceride-rich lipoprotein synthesis. Binds saturated long-chain fatty acids with a high affinity, but binds with a lower affinity to unsaturated long-chain fatty acids. FABP2 may also help maintain energy homeostasis by functioning as a lipid sensor. The polypeptide is Fatty acid-binding protein, intestinal (Fabp2) (Mus musculus (Mouse)).